Reading from the N-terminus, the 341-residue chain is Ferrochelatase (341 aa).

Positions 189 and 293 each coordinate Fe cation.

The protein belongs to the ferrochelatase family.

It localises to the cytoplasm. The catalysed reaction is heme b + 2 H(+) = protoporphyrin IX + Fe(2+). Its pathway is porphyrin-containing compound metabolism; protoheme biosynthesis; protoheme from protoporphyrin-IX: step 1/1. Catalyzes the ferrous insertion into protoporphyrin IX. The protein is Ferrochelatase of Pseudomonas fluorescens (strain SBW25).